A 790-amino-acid chain; its full sequence is Exocyst complex component SEC15A (790 aa).

Positions 49-70 (LVHQLKNVARKKEAEIEDLCKT) form a coiled coil.

This sequence belongs to the SEC15 family. In terms of assembly, the exocyst complex is composed of SEC3, SEC5, SEC6, SEC8, SEC10, EXO70A1 and EXO84B.

The protein localises to the cytoplasm. The protein resides in the cytosol. Its function is as follows. Component of the exocyst complex involved in the docking of exocytic vesicles with fusion sites on the plasma membrane during regulated or polarized secretion. Involved in polarized cell growth and organ morphogenesis. During cytokinesis, involved in cell plate initiation, cell plate maturation and formation of new primary cell wall. This chain is Exocyst complex component SEC15A (SEC15A), found in Arabidopsis thaliana (Mouse-ear cress).